Here is a 338-residue protein sequence, read N- to C-terminus: Ketol-acid reductoisomerase (NADP(+)) (338 aa).

In terms of domain architecture, KARI N-terminal Rossmann spans 1–181 (MKVYYDKDAD…GGTKGGVIET (181 aa)). NADP(+)-binding positions include 24-27 (YGSQ), R47, and S52. H107 is a catalytic residue. NADP(+) is bound at residue G133. The KARI C-terminal knotted domain occupies 182–327 (NFREETETDL…GQLRDMMPWI (146 aa)). The Mg(2+) site is built by D190, E194, E226, and E230. S251 is a binding site for substrate.

Belongs to the ketol-acid reductoisomerase family. The cofactor is Mg(2+).

The catalysed reaction is (2R)-2,3-dihydroxy-3-methylbutanoate + NADP(+) = (2S)-2-acetolactate + NADPH + H(+). The enzyme catalyses (2R,3R)-2,3-dihydroxy-3-methylpentanoate + NADP(+) = (S)-2-ethyl-2-hydroxy-3-oxobutanoate + NADPH + H(+). The protein operates within amino-acid biosynthesis; L-isoleucine biosynthesis; L-isoleucine from 2-oxobutanoate: step 2/4. It participates in amino-acid biosynthesis; L-valine biosynthesis; L-valine from pyruvate: step 2/4. Its function is as follows. Involved in the biosynthesis of branched-chain amino acids (BCAA). Catalyzes an alkyl-migration followed by a ketol-acid reduction of (S)-2-acetolactate (S2AL) to yield (R)-2,3-dihydroxy-isovalerate. In the isomerase reaction, S2AL is rearranged via a Mg-dependent methyl migration to produce 3-hydroxy-3-methyl-2-ketobutyrate (HMKB). In the reductase reaction, this 2-ketoacid undergoes a metal-dependent reduction by NADPH to yield (R)-2,3-dihydroxy-isovalerate. In Dechloromonas aromatica (strain RCB), this protein is Ketol-acid reductoisomerase (NADP(+)).